The sequence spans 576 residues: MAGUK p55 subfamily member 7 (576 aa).

2 consecutive L27 domains span residues S10–P65 and P67–V122. Residues I139–S220 form the PDZ domain. The region spanning E228–L298 is the SH3 domain. The phospho-regulated basic and hydrophobic (PRBH) motif stretch occupies residues P289–E383. In terms of domain architecture, Guanylate kinase-like spans Y368–D560. S409 carries the phosphoserine modification.

Belongs to the MAGUK family. In terms of assembly, heterodimer; able to heterodimerize via its C-terminal L27 domain with LIN7A, LIN7B and LIN7C. Forms a tripartite complex composed of DLG1, MPP7 and LIN7 (LIN7A or LIN7C). Interacts with DLG1 via its N-terminal L27 domain. Interacts with PALS1 and PATJ. Phosphorylated by aPKC which promotes dissociation from the cell cortex.

The protein localises to the membrane. The protein resides in the lateral cell membrane. Its subcellular location is the cell junction. It is found in the tight junction. It localises to the adherens junction. The protein localises to the cytoplasm. The protein resides in the cell cortex. In terms of biological role, acts as an important adapter that promotes epithelial cell polarity and tight junction formation via its interaction with DLG1. Involved in the assembly of protein complexes at sites of cell-cell contact. This is MAGUK p55 subfamily member 7 (MPP7) from Homo sapiens (Human).